We begin with the raw amino-acid sequence, 215 residues long: Oligoribonuclease (215 aa).

Residues 5-170 (LVWIDCEMTG…ADIHESIREL (166 aa)) form the Exonuclease domain. The active site involves Tyr127. A disordered region spans residues 196–215 (LGPPGKDAADTDSAAGHTTG).

It belongs to the oligoribonuclease family.

The protein localises to the cytoplasm. In terms of biological role, 3'-to-5' exoribonuclease specific for small oligoribonucleotides. This chain is Oligoribonuclease, found in Mycobacterium sp. (strain JLS).